Here is a 217-residue protein sequence, read N- to C-terminus: C-type lectin domain family 2 member I (217 aa).

The Cytoplasmic portion of the chain corresponds to 1–53 (MPDCLETGEKLFVHNMNAQCVQKPEEGNGPLGTGGKIVQGKCFRIISTVSPVK). Residues 54 to 74 (LYCCYGVIMVLTVAVIALSVA) form a helical; Signal-anchor for type II membrane protein membrane-spanning segment. Residues 75–217 (LSTKKTEQII…YNLHCQTPPV (143 aa)) are Extracellular-facing. A disulfide bond links cysteine 92 and cysteine 103. The C-type lectin domain maps to 99–203 (VGNKCFYFSG…SYINRMWICS (105 aa)). N-linked (GlcNAc...) asparagine glycosylation occurs at asparagine 112. A disulfide bridge links cysteine 120 with cysteine 202.

In terms of tissue distribution, detected in osteoblasts, growth plate chondrocytes and skeletal muscle overlying the bone (at protein level). Detected in spleen, B-cells, dendritic cells, thymus, and in IL2-activated natural killer cells.

It is found in the cell membrane. Functionally, inhibits osteoclast formation. Receptor for KLRB1F. Enhances T-cell activation. Plays a role in splenocyte activation, T-cell responses and IL-2 production. The chain is C-type lectin domain family 2 member I (Clec2i) from Mus musculus (Mouse).